Here is a 921-residue protein sequence, read N- to C-terminus: Protein translocase subunit SecA (921 aa).

ATP-binding positions include Gln-87, 105–109 (GEGKT), and Asp-501. The disordered stretch occupies residues 831–886 (PFPVINTETSGPSEEPAGLFSQGTTGGDIPAPQPMAGFPSAAPMPPRPQPVPTGAE). The span at 872 to 881 (APMPPRPQPV) shows a compositional bias: pro residues. Zn(2+) is bound by residues Cys-905, Cys-907, Cys-916, and His-917.

It belongs to the SecA family. Monomer and homodimer. Part of the essential Sec protein translocation apparatus which comprises SecA, SecYEG and auxiliary proteins SecDF-YajC and YidC. It depends on Zn(2+) as a cofactor.

Its subcellular location is the cell inner membrane. It is found in the cytoplasm. It catalyses the reaction ATP + H2O + cellular proteinSide 1 = ADP + phosphate + cellular proteinSide 2.. Its function is as follows. Part of the Sec protein translocase complex. Interacts with the SecYEG preprotein conducting channel. Has a central role in coupling the hydrolysis of ATP to the transfer of proteins into and across the cell membrane, serving both as a receptor for the preprotein-SecB complex and as an ATP-driven molecular motor driving the stepwise translocation of polypeptide chains across the membrane. This chain is Protein translocase subunit SecA, found in Gluconobacter oxydans (strain 621H) (Gluconobacter suboxydans).